The following is a 517-amino-acid chain: Bifunctional purine biosynthesis protein PurH (517 aa).

The region spanning 1–145 is the MGS-like domain; the sequence is MSPLALVSVS…KNHKDVSVLV (145 aa).

It belongs to the PurH family.

It carries out the reaction (6R)-10-formyltetrahydrofolate + 5-amino-1-(5-phospho-beta-D-ribosyl)imidazole-4-carboxamide = 5-formamido-1-(5-phospho-D-ribosyl)imidazole-4-carboxamide + (6S)-5,6,7,8-tetrahydrofolate. It catalyses the reaction IMP + H2O = 5-formamido-1-(5-phospho-D-ribosyl)imidazole-4-carboxamide. Its pathway is purine metabolism; IMP biosynthesis via de novo pathway; 5-formamido-1-(5-phospho-D-ribosyl)imidazole-4-carboxamide from 5-amino-1-(5-phospho-D-ribosyl)imidazole-4-carboxamide (10-formyl THF route): step 1/1. The protein operates within purine metabolism; IMP biosynthesis via de novo pathway; IMP from 5-formamido-1-(5-phospho-D-ribosyl)imidazole-4-carboxamide: step 1/1. In Prochlorococcus marinus (strain AS9601), this protein is Bifunctional purine biosynthesis protein PurH.